The following is a 478-amino-acid chain: NADH-ubiquinone oxidoreductase 49 kDa subunit, mitochondrial (478 aa).

The transit peptide at 1–42 (MATTLFRLAGRNAKRHCMRQSTTIAHNLNSTRAFSASALRRY) directs the protein to the mitochondrion. Cysteine 341, cysteine 347, and cysteine 362 together coordinate [4Fe-4S] cluster.

It belongs to the complex I 49 kDa subunit family. Complex I is composed of about 40 different subunits. [4Fe-4S] cluster is required as a cofactor.

The protein localises to the mitochondrion inner membrane. It carries out the reaction a ubiquinone + NADH + 5 H(+)(in) = a ubiquinol + NAD(+) + 4 H(+)(out). Its function is as follows. Core subunit of the mitochondrial membrane respiratory chain NADH dehydrogenase (Complex I) that is believed to belong to the minimal assembly required for catalysis. Complex I functions in the transfer of electrons from NADH to the respiratory chain. The immediate electron acceptor for the enzyme is believed to be ubiquinone. The chain is NADH-ubiquinone oxidoreductase 49 kDa subunit, mitochondrial (nuo-49) from Neurospora crassa (strain ATCC 24698 / 74-OR23-1A / CBS 708.71 / DSM 1257 / FGSC 987).